We begin with the raw amino-acid sequence, 564 residues long: Heat shock factor protein 2 (564 aa).

The DNA-binding element occupies 21–126; that stretch reads VPAFLSKLWA…LLEHIKRKVS (106 aa). The tract at residues 133–206 is hydrophobic repeat HR-A/B; that stretch reads NKISQEDLSK…VTLVQNNQLV (74 aa). Residues 271–280 show a composition bias toward acidic residues; sequence EENTMVDEEN. 2 disordered regions span residues 271–301 and 320–347; these read EENTMVDEENAPITPETNEDTTSDSSNCSRS and QGDKSTESVAVSANDPLSPVSDSTSPLM. Residues 390-415 form a hydrophobic repeat HR-C region; the sequence is LLDYLDSIDCSLEDFQAMLSGRQFSI. The span at 448–465 shows a compositional bias: polar residues; it reads TTKSNAGPAASQETQVSK. The tract at residues 448–468 is disordered; the sequence is TTKSNAGPAASQETQVSKPKS.

This sequence belongs to the HSF family. Homotrimer. Expressed in most tissues with the exceptions of blood and liver.

The protein localises to the cytoplasm. Its subcellular location is the nucleus. Functionally, DNA-binding protein that specifically binds heat shock promoter elements (HSE) and activates transcription. HSF2 shows constitutive DNA binding activity, even without heat shock. The protein is Heat shock factor protein 2 (HSF2) of Gallus gallus (Chicken).